The sequence spans 178 residues: MTKKEQALIEQYAKSLVEVASEHHSLDALQADVLAILETFVTTNLDQSLSSQAVPHAEKIKLLTLLKGNNSVYMNNFLNLILQNEREAYLYQMLQAVLNEIAIVSNQYDVTVTSSLPLTEEQKSRVRAVVAKKFAVTAGRLIEKVDPSLIGGFIISVNNKVIDTSIRRQLQAFKMNLK.

It belongs to the ATPase delta chain family. As to quaternary structure, F-type ATPases have 2 components, F(1) - the catalytic core - and F(0) - the membrane proton channel. F(1) has five subunits: alpha(3), beta(3), gamma(1), delta(1), epsilon(1). F(0) has three main subunits: a(1), b(2) and c(10-14). The alpha and beta chains form an alternating ring which encloses part of the gamma chain. F(1) is attached to F(0) by a central stalk formed by the gamma and epsilon chains, while a peripheral stalk is formed by the delta and b chains.

Its subcellular location is the cell membrane. Its function is as follows. F(1)F(0) ATP synthase produces ATP from ADP in the presence of a proton or sodium gradient. F-type ATPases consist of two structural domains, F(1) containing the extramembraneous catalytic core and F(0) containing the membrane proton channel, linked together by a central stalk and a peripheral stalk. During catalysis, ATP synthesis in the catalytic domain of F(1) is coupled via a rotary mechanism of the central stalk subunits to proton translocation. In terms of biological role, this protein is part of the stalk that links CF(0) to CF(1). It either transmits conformational changes from CF(0) to CF(1) or is implicated in proton conduction. This chain is ATP synthase subunit delta, found in Streptococcus pyogenes serotype M1.